Reading from the N-terminus, the 248-residue chain is 3-deoxy-manno-octulosonate cytidylyltransferase (248 aa).

Belongs to the KdsB family.

It localises to the cytoplasm. It catalyses the reaction 3-deoxy-alpha-D-manno-oct-2-ulosonate + CTP = CMP-3-deoxy-beta-D-manno-octulosonate + diphosphate. Its pathway is nucleotide-sugar biosynthesis; CMP-3-deoxy-D-manno-octulosonate biosynthesis; CMP-3-deoxy-D-manno-octulosonate from 3-deoxy-D-manno-octulosonate and CTP: step 1/1. The protein operates within bacterial outer membrane biogenesis; lipopolysaccharide biosynthesis. Activates KDO (a required 8-carbon sugar) for incorporation into bacterial lipopolysaccharide in Gram-negative bacteria. The protein is 3-deoxy-manno-octulosonate cytidylyltransferase of Citrobacter koseri (strain ATCC BAA-895 / CDC 4225-83 / SGSC4696).